The following is a 276-amino-acid chain: MKNVYVWPHFDPILVRFGPFAIHYYALAYITALVLGWRLMRRLVREAPVVATHEQVDDFLSWATLGVVLGGRLGYILFYQPVYFLDHLNRTYAVWDGGMSFHGGMLGVAVAILIYCRRHGIDPWRFGDRVAVPVPIGLFLGRIANFVNGELWGRPAPAWFPFRMIYPESGSDVPRYPSELIEATLEGLVLFIVLLIASRNERIRSQPGYLGGMFVMGYGIARTTAECFRQPDWFLGYLMFGLTMGQLLSIPMIVIGATMIWRAKYVARRQGALATA.

Transmembrane regions (helical) follow at residues 17 to 37, 59 to 79, 94 to 114, 132 to 152, 177 to 197, 208 to 225, and 235 to 255; these read FGPF…VLGW, FLSW…ILFY, VWDG…AILI, VPVP…GELW, PSEL…LLIA, GYLG…RTTA, and LGYL…MIVI. R142 serves as a coordination point for a 1,2-diacyl-sn-glycero-3-phospho-(1'-sn-glycerol).

Belongs to the Lgt family.

Its subcellular location is the cell inner membrane. The catalysed reaction is L-cysteinyl-[prolipoprotein] + a 1,2-diacyl-sn-glycero-3-phospho-(1'-sn-glycerol) = an S-1,2-diacyl-sn-glyceryl-L-cysteinyl-[prolipoprotein] + sn-glycerol 1-phosphate + H(+). Its pathway is protein modification; lipoprotein biosynthesis (diacylglyceryl transfer). Catalyzes the transfer of the diacylglyceryl group from phosphatidylglycerol to the sulfhydryl group of the N-terminal cysteine of a prolipoprotein, the first step in the formation of mature lipoproteins. The chain is Phosphatidylglycerol--prolipoprotein diacylglyceryl transferase from Acidiphilium cryptum (strain JF-5).